We begin with the raw amino-acid sequence, 331 residues long: Protein PER1 homolog (331 aa).

The N-terminal stretch at 1–24 is a signal peptide; that stretch reads MRVLRNFTIFFLFTALSLFRQISA. Residues 25–100 are Lumenal-facing; sequence SAGDLHPVYV…QYHGKWYFIR (76 aa). The chain crosses the membrane as a helical span at residues 101 to 121; that stretch reads VFGIQELFSVFFSMLNFMIHY. The Cytoplasmic segment spans residues 122-139; the sequence is NGYHIMRRCIPDEHPAKR. The helical transmembrane segment at 140 to 160 threads the bilayer; sequence LCLSWAIVGMNAWVWSSVFHI. The Lumenal portion of the chain corresponds to 161-168; the sequence is RDTPITEK. A helical membrane pass occupies residues 169-189; that stretch reads LDYFSAGAFVLFGSYCTLILM. Residues 190–199 lie on the Cytoplasmic side of the membrane; it reads LRLDQLPGGK. A helical transmembrane segment spans residues 200–220; that stretch reads LLCWIIGVIFIAAFIAHVSYL. The Lumenal segment spans residues 221-232; it reads SFYSFDYGYNMK. Residues 233-250 form a helical membrane-spanning segment; that stretch reads ANVAVGLVQNILWYYYSW. The Cytoplasmic portion of the chain corresponds to 251–263; the sequence is SNRNSGLYWTRWP. Residues 264 to 284 traverse the membrane as a helical segment; it reads AYIVTSLMLATSLELFDFSPI. Residues 285 to 289 lie on the Lumenal side of the membrane; sequence ANLID. A helical transmembrane segment spans residues 290–310; the sequence is AHALWHLSTVPITHYLYGFVV. Residues 311 to 331 lie on the Cytoplasmic side of the membrane; sequence RKCSYDLTKGTFKIKAYDSSR.

It belongs to the PGAP3/PER1 family.

The protein resides in the endoplasmic reticulum membrane. It is found in the vacuole membrane. In terms of biological role, involved in the lipid remodeling steps of GPI-anchor maturation. Lipid remodeling steps consist in the generation of 2 saturated fatty chains at the sn-2 position of GPI-anchors proteins. Required for phospholipase A2 activity that removes an acyl-chain at the sn-2 position of GPI-anchors during the remodeling of GPI. Required for efficient transport of GPI-anchor proteins. This chain is Protein PER1 homolog, found in Schizosaccharomyces pombe (strain 972 / ATCC 24843) (Fission yeast).